Reading from the N-terminus, the 538-residue chain is Lipid scramblase CLPTM1L (538 aa).

Residues 1–9 (MFPKTSFTS) are Cytoplasmic-facing. The helical transmembrane segment at 10-30 (LIVGVFLLYVLHTCWVMYGIV) threads the bilayer. Over 31-284 (YTKPCEKRRA…IKGIFVDTNL (254 aa)) the chain is Extracellular. Residues N90 and N100 are each glycosylated (N-linked (GlcNAc...) asparagine). The segment at 140–166 (ISLITGQDEPEKPDQQKQSSDSELDRP) is disordered. Residue N229 is glycosylated (N-linked (GlcNAc...) asparagine). A helical membrane pass occupies residues 285 to 305 (YFLALTFFVAAFHLLFDFLAF). Residues 306–324 (KNDISFWKHKKSMVGMSSK) are Cytoplasmic-facing. A helical transmembrane segment spans residues 325-341 (AVLWRCFSTIVIFLYLL). Over 342-402 (DEQTSLLVLV…TEEYDTLAMK (61 aa)) the chain is Extracellular. A helical membrane pass occupies residues 403 to 423 (YLSYLLYPLCVGGAVYALVFV). Residues 424–428 (KYKSW) lie on the Cytoplasmic side of the membrane. A helical membrane pass occupies residues 429-449 (YSWIINSLVNGVYAFGFLFML). The Extracellular segment spans residues 450 to 538 (PQLFVNYKLK…EKPKGKSHED (89 aa)).

Belongs to the CLPTM1 family.

It is found in the endoplasmic reticulum membrane. It catalyses the reaction a 6-(alpha-D-glucosaminyl)-1-(1,2-diacyl-sn-glycero-3-phospho)-1D-myo-inositol(in) = a 6-(alpha-D-glucosaminyl)-1-(1,2-diacyl-sn-glycero-3-phospho)-1D-myo-inositol(out). It carries out the reaction 6-(alpha-D-glucosaminyl)-(1-octadecanoyl,2-(9Z)-octadecenoyl-sn-glycero-3-phospho)-1D-myo-inositol(in) = 6-(alpha-D-glucosaminyl)-(1-octadecanoyl,2-(9Z)-octadecenoyl-sn-glycero-3-phospho)-1D-myo-inositol(out). The enzyme catalyses a 1,2-diacyl-sn-glycero-3-phospho-(1D-myo-inositol)(in) = a 1,2-diacyl-sn-glycero-3-phospho-(1D-myo-inositol)(out). The catalysed reaction is a 1,2-diacyl-sn-glycero-3-phosphocholine(in) = a 1,2-diacyl-sn-glycero-3-phosphocholine(out). It catalyses the reaction a 1,2-diacyl-sn-glycero-3-phosphoethanolamine(in) = a 1,2-diacyl-sn-glycero-3-phosphoethanolamine(out). Scramblase that mediates the translocation of glucosaminylphosphatidylinositol (alpha-D-GlcN-(1-6)-(1,2-diacyl-sn-glycero-3-phospho)-1D-myo-inositol, GlcN-PI) across the endoplasmic reticulum (ER) membrane, from the cytosolic leaflet to the luminal leaflet of the ER membrane, where it participates in the biosynthesis of glycosylphosphatidylinositol (GPI). GPI is a lipid glycoconjugate involved in post-translational modification of proteins. Can also translocate 1,2-diacyl-sn-glycero-3-phospho-(1D-myo-inositol) (phosphatidylinositol or PI), as well as several other phospholipids (1,2-diacyl-sn-glycero-3-phosphocholine, 1,2-diacyl-sn-glycero-3-phosphoethanolamine), and N-acetylglucosaminylphosphatidylinositol (GlcNAc-PI) in vitro. This chain is Lipid scramblase CLPTM1L (clptm1l), found in Danio rerio (Zebrafish).